A 261-amino-acid chain; its full sequence is Indole-3-glycerol phosphate synthase (261 aa).

This sequence belongs to the TrpC family.

It catalyses the reaction 1-(2-carboxyphenylamino)-1-deoxy-D-ribulose 5-phosphate + H(+) = (1S,2R)-1-C-(indol-3-yl)glycerol 3-phosphate + CO2 + H2O. It participates in amino-acid biosynthesis; L-tryptophan biosynthesis; L-tryptophan from chorismate: step 4/5. This Campylobacter concisus (strain 13826) protein is Indole-3-glycerol phosphate synthase.